The chain runs to 167 residues: MPLNKESKQAVVAEVAAQVAKAQTVVLAEYRGIAVGDLTKLRAKAREQQVYLRVLKNTLARRAVEGTPFAPLAEQMTGPLIYGISEDAIAAAKVVNDFGKTNDKLIIKAGSYEGKVMDKAGVQALANIPSREELLSKLLYVMQAPVSGFARALAALAEKKQGEETAA.

It belongs to the universal ribosomal protein uL10 family. In terms of assembly, part of the ribosomal stalk of the 50S ribosomal subunit. The N-terminus interacts with L11 and the large rRNA to form the base of the stalk. The C-terminus forms an elongated spine to which L12 dimers bind in a sequential fashion forming a multimeric L10(L12)X complex.

Functionally, forms part of the ribosomal stalk, playing a central role in the interaction of the ribosome with GTP-bound translation factors. This chain is Large ribosomal subunit protein uL10, found in Paraburkholderia phytofirmans (strain DSM 17436 / LMG 22146 / PsJN) (Burkholderia phytofirmans).